The sequence spans 425 residues: MDQLTSAARLMIVSDLDHTMVDHHDAENLSLLRFNALWEANYRDNSLLVFSTGRSPTLYKELRKEKPMLTPDITIMSVGTEITYGNSVVPDDGWEAFLNNKWDRKIVTEETSKFPELTLQSETEQRPHKVSFYVQKDKAQDIMKTLSKRFEERGLDVKIIYSGGMDLDILPQGAGKGQALAYLLKKLKSEGKLPNNTLACGDSGNDAELFSIPDVYGVMVANAQEELLQWHAANAKNNPKVIHATERCAAGIIQAIGHSNLGPSTSPRDVMDLSDCKMENFVPAYEVVKFYLFFEKWRRGEIEHSEHYLSNLKAVCRPSGTFVHPSGVEKSLQECVTLFGTCHGDKQGKQFRIWVDQVLPVQVGSDSWLVSFKKWELSGEDRRCCITTVLLSSKNKTVADGLTWTHVHQTWLNGAAASDSASWFF.

The protein belongs to the sucrose phosphatase family. As to quaternary structure, homodimer. Mg(2+) is required as a cofactor.

The catalysed reaction is sucrose 6(F)-phosphate + H2O = sucrose + phosphate. It functions in the pathway glycan biosynthesis; sucrose biosynthesis; sucrose from D-fructose 6-phosphate and UDP-alpha-D-glucose: step 2/2. Inhibited by EDTA. In terms of biological role, catalyzes the final step of sucrose synthesis. The protein is Sucrose-phosphatase 2 (SPP2) of Nicotiana tabacum (Common tobacco).